The chain runs to 235 residues: Sugar fermentation stimulation protein homolog (235 aa).

This sequence belongs to the SfsA family.

The sequence is that of Sugar fermentation stimulation protein homolog from Maricaulis maris (strain MCS10) (Caulobacter maris).